Consider the following 492-residue polypeptide: MSAEAEAIVTTATADVSSPSKTVAVEPVAADTTPDNAPAVSTEGSGKAEQERAEKILKGKELFSQGSRNFLVKSYDEAADELSQVCQLYEEVYGELADELGQPLLLYAKALIAMALDENKVIDVPDEAADDDDEDVDDDEEESAEDGAAKKEEKKDTKEAANGASSSNGKELDTIKEGSDEADSTGEAEQAQSDEKPSKKVPTGVDEVSSSNGGGGAAVNDDERPSTSNGEVTASCSNGAAPAVEEEPEEEEGVSGSLQLAWEILEAAAQIFSRQGLSGLPYLAEVQTELANIEFENGILEAAREDYEKALKIHGELPTRNRRALAELHYKIGLTYLMQQLNKEGATALRQSSVLIEEEIAEIKGKDEPSERDRNNMLDLEETKQEILAKIQEIEEMQAQTIAEVRAALDSYIKPMSSGDAAAASSSSSSSANGAASSSSSSSKGAAAASSSTISSSSAKPTDITHLIKRKKPEDPSSEAEALCSPAKRAAV.

The segment covering 1–14 (MSAEAEAIVTTATA) has biased composition (low complexity). Disordered regions lie at residues 1–52 (MSAE…EQER) and 123–254 (DVPD…EEGV). 2 positions are modified to phosphothreonine: Thr32 and Thr33. Over residues 124–145 (VPDEAADDDDEDVDDDEEESAE) the composition is skewed to acidic residues. Composition is skewed to basic and acidic residues over residues 147–159 (GAAKKEEKKDTKE) and 170–179 (KELDTIKEGS). Phosphoserine occurs at positions 179 and 184. A Phosphothreonine modification is found at Thr185. Ser193 is modified (phosphoserine). Over residues 226 to 238 (STSNGEVTASCSN) the composition is skewed to polar residues. Acidic residues predominate over residues 244-253 (VEEEPEEEEG). TPR repeat units lie at residues 284–317 (AEVQTELANIEFENGILEAAREDYEKALKIHGEL) and 326–359 (AELHYKIGLTYLMQQLNKEGATALRQSSVLIEEE). Residues 377-400 (MLDLEETKQEILAKIQEIEEMQAQ) adopt a coiled-coil conformation. A compositionally biased stretch (low complexity) spans 418-459 (SGDAAAASSSSSSSANGAASSSSSSSKGAAAASSSTISSSSA). The disordered stretch occupies residues 418-492 (SGDAAAASSS…LCSPAKRAAV (75 aa)). Phosphoserine is present on residues Ser478 and Ser485.

Belongs to the NASP family. Interacts with the histone H3-H4 heterodimer; the interaction with H4 is probably indirect and mediated by H3 (His3, His3.3A and His3.3B). Interacts with His2Av; this interaction directly or indirectly destabilizes His2Av.

The protein resides in the cytoplasm. Its subcellular location is the nucleus. It is found in the perinuclear region. Component of the histone chaperone network. Binds and stabilizes histone H3-H4 not bound to chromatin to maintain a soluble reservoir and modulate degradation by chaperone-mediated autophagy. May also bind and stabilize monomeric H3. Maternal effect gene essential for early embryogenesis. This chain is Nuclear autoantigenic sperm protein homolog, found in Drosophila melanogaster (Fruit fly).